A 387-amino-acid chain; its full sequence is TSC22 domain family protein 4 (387 aa).

2 disordered regions span residues 1–85 (MSGG…GEPY) and 135–232 (ISTP…RRDG). Positions 28–51 (SDPPAPPAPAGPPPRLPNGEPNPD) are enriched in pro residues. Thr-57 is subject to Phosphothreonine. Residues Ser-62 and Ser-165 each carry the phosphoserine modification. Residue Thr-183 is modified to Phosphothreonine. A phosphoserine mark is found at Ser-187 and Ser-189. Thr-223 carries the post-translational modification Phosphothreonine. Residues Ser-254, Ser-258, and Ser-271 each carry the phosphoserine modification. The segment at 336-357 (LKEQIRDLAERNAALEQENGLL) is leucine-zipper. Phosphoserine is present on Ser-362. The tract at residues 368–387 (QLPSSGLPRLGPSAPNGPSI) is disordered.

It belongs to the TSC-22/Dip/Bun family. Forms a homodimer or heterodimer. Forms a heterodimer with TSC22D1 isoforms 1 and 2. Interacts with NRBP1.

The protein localises to the nucleus. Its subcellular location is the cytoplasm. It localises to the cell projection. It is found in the dendrite. The protein resides in the synapse. Functionally, binds DNA and acts as a transcriptional repressor. Involved in the regulation of systematic glucose homeostasis and insulin sensitivity, via transcriptional repression of downstream insulin signaling targets such as OBP2A/LCN13. Acts as a negative regulator of lipogenic gene expression in hepatocytes and thereby mediates the control of very low-density lipoprotein release. May play a role in neurite elongation and survival. This Rattus norvegicus (Rat) protein is TSC22 domain family protein 4.